The following is a 236-amino-acid chain: UPF0257 lipoprotein YnfC (236 aa).

Residues 1–16 (MKYKLLPCLLAILLTG) form the signal peptide. The N-palmitoyl cysteine moiety is linked to residue Cys17. The S-diacylglycerol cysteine moiety is linked to residue Cys17.

The protein belongs to the UPF0257 family.

The protein resides in the cell membrane. This chain is UPF0257 lipoprotein YnfC, found in Escherichia coli O81 (strain ED1a).